The primary structure comprises 252 residues: uncharacterized protein (252 aa).

Tandem repeats lie at residues 68 to 82 (TYNQ…DLVD), 83 to 97 (TYNQ…DLVD), 98 to 112 (TYNQ…DLVD), 113 to 127 (TYNQ…DLVD), 128 to 142 (TYNQ…DLVD), 143 to 157 (TYNQ…DLVD), 158 to 172 (TYNQ…DLID), 173 to 187 (TYNQ…DLVD), 188 to 202 (TYNQ…DLVD), and 203 to 217 (TYNQ…DLVD). The tract at residues 68–246 (TYNQSQNVCP…LIDTYNQSQN (179 aa)) is 13 X 15 AA tandem repeats. The 11; truncated repeat unit spans residues 218–230 (TYNQSQNVCPQDL). The stretch at 231 to 239 (NVYTQDLID) is one 12; truncated repeat. Residues 240 to 246 (TYNQSQN) form a 13; truncated repeat.

Functionally, a protein probably derived from this gene is found in cuboidal crystalline inclusions, but is not toxic even when coexpressed with upstream ORF1. The protein runs anomalously as a 50 kDa band in gels. This is an uncharacterized protein from Bacillus thuringiensis subsp. kurstaki.